Here is a 445-residue protein sequence, read N- to C-terminus: 8-amino-7-oxononanoate synthase (445 aa).

Arginine 40 lines the substrate pocket. Glycine 131–tyrosine 132 is a binding site for pyridoxal 5'-phosphate. A substrate-binding site is contributed by histidine 156. The pyridoxal 5'-phosphate site is built by serine 202, histidine 230, and threonine 258. An N6-(pyridoxal phosphate)lysine modification is found at lysine 261. Residue threonine 377 coordinates substrate. The interval alanine 408–alanine 445 is disordered.

The protein belongs to the class-II pyridoxal-phosphate-dependent aminotransferase family. BioF subfamily. Homodimer. Requires pyridoxal 5'-phosphate as cofactor.

It catalyses the reaction 6-carboxyhexanoyl-[ACP] + L-alanine + H(+) = (8S)-8-amino-7-oxononanoate + holo-[ACP] + CO2. It participates in cofactor biosynthesis; biotin biosynthesis. Its function is as follows. Catalyzes the decarboxylative condensation of pimeloyl-[acyl-carrier protein] and L-alanine to produce 8-amino-7-oxononanoate (AON), [acyl-carrier protein], and carbon dioxide. This chain is 8-amino-7-oxononanoate synthase, found in Burkholderia ambifaria (strain MC40-6).